Consider the following 66-residue polypeptide: Photosystem II reaction center protein H (66 aa).

Residues 27–47 (GAVPVMTVIGLLLLVFLVILL) traverse the membrane as a helical segment.

The protein belongs to the PsbH family. PSII is composed of 1 copy each of membrane proteins PsbA, PsbB, PsbC, PsbD, PsbE, PsbF, PsbH, PsbI, PsbJ, PsbK, PsbL, PsbM, PsbT, PsbX, PsbY, Psb30/Ycf12, peripheral proteins PsbO, CyanoQ (PsbQ), PsbU, PsbV and a large number of cofactors. It forms dimeric complexes.

Its subcellular location is the cellular thylakoid membrane. Its function is as follows. One of the components of the core complex of photosystem II (PSII), required for its stability and/or assembly. PSII is a light-driven water:plastoquinone oxidoreductase that uses light energy to abstract electrons from H(2)O, generating O(2) and a proton gradient subsequently used for ATP formation. It consists of a core antenna complex that captures photons, and an electron transfer chain that converts photonic excitation into a charge separation. This chain is Photosystem II reaction center protein H, found in Prochlorococcus marinus (strain MIT 9215).